The following is a 567-amino-acid chain: Formate--tetrahydrofolate ligase (567 aa).

68–75 (TPLGEGKT) is a binding site for ATP.

The protein belongs to the formate--tetrahydrofolate ligase family.

The catalysed reaction is (6S)-5,6,7,8-tetrahydrofolate + formate + ATP = (6R)-10-formyltetrahydrofolate + ADP + phosphate. It functions in the pathway one-carbon metabolism; tetrahydrofolate interconversion. This chain is Formate--tetrahydrofolate ligase, found in Desulforamulus reducens (strain ATCC BAA-1160 / DSM 100696 / MI-1) (Desulfotomaculum reducens).